The primary structure comprises 1416 residues: K homology domain-containing protein 4 (1416 aa).

Disordered regions lie at residues 25–76 (NPNG…TSMR), 108–174 (KAEA…TRSS), 196–225 (VNSS…LSQS), 255–320 (QNDE…FPGR), and 341–385 (SSLN…MPKP). Low complexity-rich tracts occupy residues 196–213 (VNSS…SANH), 273–285 (QSSF…LDQL), and 341–350 (SSLNPPASGS). The segment covering 357 to 369 (GLSSAQPLRSPQP) has biased composition (polar residues). KH domains follow at residues 412–504 (FKST…VILD), 508–594 (GLRS…QVSM), 747–816 (FEVR…EELP), 817–892 (AEMS…SVME), and 900–968 (DYIS…DHVP). Disordered stretches follow at residues 1215-1240 (AGVS…SGHR) and 1289-1416 (HASG…FDRA). Residues 1219–1239 (VPTSGGIQFPSQPSLHQQSGH) show a composition bias toward polar residues. The segment covering 1343-1374 (QQQAQQQLQYQQQQQQQQQQQQQPGYGMPHQP) has biased composition (low complexity). Polar residues predominate over residues 1391–1402 (RNTQNPDSTTMD).

RNA-binding protein that recognizes the sequence AUACCC via its tandem KH domains 3 and 4, probably in order to promote mRNA instability. Plays an essential role in filamentous growth and virulence. This Mycosarcoma maydis (Corn smut fungus) protein is K homology domain-containing protein 4.